Consider the following 437-residue polypeptide: MDGNDNVTLLFAPLLRDNYTLAPNASSLGPGTDLALAPASSAGPGPGLSLGPGPSFGFSPGPTPTPEPTTSGLAGGAASHGPSPFPRPWAPHALPFWDTPLNHGLNVFVGAALCITMLGLGCTVDVNHFGAHVRRPVGALLAALCQFGLLPLLAFLLALAFKLDEVAAVAVLLCGCCPGGNLSNLMSLLVDGDMNLSIIMTISSTLLALVLMPLCLWIYSWAWINTPIVQLLPLGTVTLTLCSTLIPIGLGVFIRYKYSRVADYIVKVSLWSLLVTLVVLFIMTGTMLGPELLASIPAAVYVIAIFMPLAGYASGYGLATLFHLPPNCKRTVCLETGSQNVQLCTAILKLAFPPQFIGSMYMFPLLYALFQSAEAGIFVLIYKMYGSEMLHKRDPLDEDEDTDISYKKLKEEEMADTSYGTVKAENIIMMETAQTSL.

Over 1 to 103 (MDGNDNVTLL…LPFWDTPLNH (103 aa)) the chain is Extracellular. N-linked (GlcNAc...) asparagine glycosylation is found at N6, N18, and N24. Residues 37-82 (APASSAGPGPGLSLGPGPSFGFSPGPTPTPEPTTSGLAGGAASHGP) are disordered. Low complexity predominate over residues 51 to 60 (GPGPSFGFSP). The helical transmembrane segment at 104 to 124 (GLNVFVGAALCITMLGLGCTV) threads the bilayer. At 125-140 (DVNHFGAHVRRPVGAL) the chain is on the cytoplasmic side. The helical transmembrane segment at 141 to 161 (LAALCQFGLLPLLAFLLALAF) threads the bilayer. The Extracellular segment spans residues 162–197 (KLDEVAAVAVLLCGCCPGGNLSNLMSLLVDGDMNLS). Residues N181 and N195 are each glycosylated (N-linked (GlcNAc...) asparagine). A helical transmembrane segment spans residues 198–218 (IIMTISSTLLALVLMPLCLWI). Topologically, residues 219 to 233 (YSWAWINTPIVQLLP) are cytoplasmic. A helical membrane pass occupies residues 234–254 (LGTVTLTLCSTLIPIGLGVFI). Topologically, residues 255–267 (RYKYSRVADYIVK) are extracellular. The chain crosses the membrane as a helical span at residues 268 to 288 (VSLWSLLVTLVVLFIMTGTML). Over 289-291 (GPE) the chain is Cytoplasmic. The chain crosses the membrane as a helical span at residues 292–312 (LLASIPAAVYVIAIFMPLAGY). Residues 313–360 (ASGYGLATLFHLPPNCKRTVCLETGSQNVQLCTAILKLAFPPQFIGSM) lie on the Extracellular side of the membrane. A helical membrane pass occupies residues 361–381 (YMFPLLYALFQSAEAGIFVLI). Topologically, residues 382–437 (YKMYGSEMLHKRDPLDEDEDTDISYKKLKEEEMADTSYGTVKAENIIMMETAQTSL) are cytoplasmic.

Belongs to the bile acid:sodium symporter (BASS) (TC 2.A.28) family. In terms of processing, activated following N-terminal proteolytic cleavage by thrombin and/or proteases. In terms of tissue distribution, highly expressed in brain and small intestine, and moderately expressed in colon, heart, prostate, and testis. Very low levels were detected in kidney, liver, ovary, placenta, spleen, and thymus.

It is found in the cell membrane. Transporter for bile acids. The chain is Sodium/bile acid cotransporter 4 (SLC10A4) from Homo sapiens (Human).